We begin with the raw amino-acid sequence, 306 residues long: Foldase protein PrsA (306 aa).

The N-terminal stretch at 1-20 is a signal peptide; that stretch reads MRRKIALFLALIFVGVSLVS. C21 carries the N-palmitoyl cysteine lipid modification. The S-diacylglycerol cysteine moiety is linked to residue C21. Residues 165–255 enclose the PpiC domain; that stretch reads FEVMRARHIL…YGYHIIKSEG (91 aa).

The protein belongs to the PrsA family.

The protein localises to the cell membrane. The catalysed reaction is [protein]-peptidylproline (omega=180) = [protein]-peptidylproline (omega=0). Plays a major role in protein secretion by helping the post-translocational extracellular folding of several secreted proteins. The chain is Foldase protein PrsA from Caldanaerobacter subterraneus subsp. tengcongensis (strain DSM 15242 / JCM 11007 / NBRC 100824 / MB4) (Thermoanaerobacter tengcongensis).